Here is a 1027-residue protein sequence, read N- to C-terminus: Translation initiation factor IF-2 (1027 aa).

The interval 31 to 433 (YVKSASSTVE…GGVRLPRGNG (403 aa)) is disordered. The span at 57-68 (KKGGGDSNGRAG) shows a compositional bias: gly residues. Over residues 110-122 (GPKPGPKPGPKAP) the composition is skewed to pro residues. Low complexity predominate over residues 123–145 (APETKPFEEAPAPAAKADAPAQP). Basic and acidic residues predominate over residues 148–171 (EQPRSEQPRSEQPRSEQPRSERSG). 2 stretches are compositionally biased toward pro residues: residues 174 to 188 (PGGP…PKPG) and 201 to 212 (PPKPQSPKPGPR). The span at 237 to 268 (PGGGQRQGGQGPGRGGPQGGRPDRQGGGGQGA) shows a compositional bias: gly residues. Pro residues predominate over residues 293–302 (GMMPPRPNPG). A compositionally biased stretch (gly residues) spans 311-397 (SGGGPGGGRG…GAAGAFGRPG (87 aa)). A compositionally biased stretch (basic residues) spans 401-410 (RRGRKSKRQK). Residues 523 to 695 (SRPPVVTVMG…ILLTADATLD (173 aa)) enclose the tr-type G domain. A G1 region spans residues 532–539 (GHVDHGKT). 532 to 539 (GHVDHGKT) contacts GTP. The tract at residues 557–561 (GITQH) is G2. Residues 582-585 (DTPG) are G3. Residues 582-586 (DTPGH) and 636-639 (NKID) each bind GTP. The G4 stretch occupies residues 636-639 (NKID). A G5 region spans residues 672–674 (SAR).

It belongs to the TRAFAC class translation factor GTPase superfamily. Classic translation factor GTPase family. IF-2 subfamily.

The protein localises to the cytoplasm. In terms of biological role, one of the essential components for the initiation of protein synthesis. Protects formylmethionyl-tRNA from spontaneous hydrolysis and promotes its binding to the 30S ribosomal subunits. Also involved in the hydrolysis of GTP during the formation of the 70S ribosomal complex. This chain is Translation initiation factor IF-2, found in Saccharopolyspora erythraea (strain ATCC 11635 / DSM 40517 / JCM 4748 / NBRC 13426 / NCIMB 8594 / NRRL 2338).